The following is a 428-amino-acid chain: Aerobic C4-dicarboxylate transport protein (428 aa).

8 helical membrane-spanning segments follow: residues 5–27 (LFKSLYFQVLTAIAIGILLGHFY), 47–64 (MIIAPVIFCTVVTGIAGM), 77–99 (ALLYFEIVSTIALIIGLIIVNVV), 141–163 (VIGAFASGNILQVLLFAVLFGFA), 184–206 (VIFGIINMIMRLAPIGAFGAMAF), 219–241 (LGQLIICFYITCILFVVLVLGSI), 326–348 (IVHQITLLIVLLLSSKGAAGVTG), and 352–374 (IVLAATLSAVGHLPVAGLALILG).

This sequence belongs to the dicarboxylate/amino acid:cation symporter (DAACS) (TC 2.A.23) family.

The protein resides in the cell inner membrane. Functionally, responsible for the aerobic transport of the dicarboxylates fumarate and malate and to a lesser extent succinate, from the periplasm across the inner membrane. The sequence is that of Aerobic C4-dicarboxylate transport protein from Escherichia coli O157:H7.